Consider the following 56-residue polypeptide: Large ribosomal subunit protein bL32 (56 aa).

A compositionally biased stretch (basic residues) spans 1–16; the sequence is MAVQKSKKSRSMRGMR. The interval 1–33 is disordered; it reads MAVQKSKKSRSMRGMRRSHDALTTSAVSVDATS. Polar residues predominate over residues 21–33; the sequence is ALTTSAVSVDATS.

It belongs to the bacterial ribosomal protein bL32 family.

This chain is Large ribosomal subunit protein bL32, found in Aliivibrio fischeri (strain ATCC 700601 / ES114) (Vibrio fischeri).